We begin with the raw amino-acid sequence, 134 residues long: Endoribonuclease YbeY (134 aa).

Residues His-94, His-98, and His-104 each coordinate Zn(2+).

The protein belongs to the endoribonuclease YbeY family. The cofactor is Zn(2+).

The protein resides in the cytoplasm. Its function is as follows. Single strand-specific metallo-endoribonuclease involved in late-stage 70S ribosome quality control and in maturation of the 3' terminus of the 16S rRNA. The chain is Endoribonuclease YbeY from Campylobacter jejuni subsp. jejuni serotype O:23/36 (strain 81-176).